We begin with the raw amino-acid sequence, 486 residues long: Protein nucleotidyltransferase YdiU (486 aa).

Residues G90, G92, R93, K113, D125, G126, R176, and R183 each contribute to the ATP site. D252 acts as the Proton acceptor in catalysis. Residues N253 and D262 each contribute to the Mg(2+) site. Position 262 (D262) interacts with ATP.

The protein belongs to the SELO family. Mg(2+) is required as a cofactor. Mn(2+) serves as cofactor.

The catalysed reaction is L-seryl-[protein] + ATP = 3-O-(5'-adenylyl)-L-seryl-[protein] + diphosphate. The enzyme catalyses L-threonyl-[protein] + ATP = 3-O-(5'-adenylyl)-L-threonyl-[protein] + diphosphate. It carries out the reaction L-tyrosyl-[protein] + ATP = O-(5'-adenylyl)-L-tyrosyl-[protein] + diphosphate. It catalyses the reaction L-histidyl-[protein] + UTP = N(tele)-(5'-uridylyl)-L-histidyl-[protein] + diphosphate. The catalysed reaction is L-seryl-[protein] + UTP = O-(5'-uridylyl)-L-seryl-[protein] + diphosphate. The enzyme catalyses L-tyrosyl-[protein] + UTP = O-(5'-uridylyl)-L-tyrosyl-[protein] + diphosphate. Nucleotidyltransferase involved in the post-translational modification of proteins. It can catalyze the addition of adenosine monophosphate (AMP) or uridine monophosphate (UMP) to a protein, resulting in modifications known as AMPylation and UMPylation. The chain is Protein nucleotidyltransferase YdiU from Pseudomonas aeruginosa (strain ATCC 15692 / DSM 22644 / CIP 104116 / JCM 14847 / LMG 12228 / 1C / PRS 101 / PAO1).